The sequence spans 799 residues: Ribosome biogenesis protein BOP1 homolog (799 aa).

The disordered stretch occupies residues 1–171 (MPRRVRAQKR…DDTSDEEHSL (171 aa)). The span at 58 to 69 (SESDVTDDEQID) shows a compositional bias: acidic residues. Positions 70 to 81 (EEARQADRDLLK) are enriched in basic and acidic residues. A compositionally biased stretch (acidic residues) spans 93–121 (DPSDADNDDDDDEEEAASDDDDEEEDAEP). Low complexity predominate over residues 122 to 132 (SSDSSNEASDA). 7 WD repeats span residues 457–498 (GHKA…RVVT), 500–538 (DAEVNMVAWCPNAGVSIVAVAHGHTVSLICPRVATAAID), 584–626 (PHHA…TQHP), 629–669 (KRNR…KKLL), 670–709 (TGVRWLSSLAIHPAGDNLIIGSYDKRLCWFDMDLSIKPYK), 713–752 (YHKYALRQVCFHKKYPIFASCGDDGNVHVLHGMVYNDLGQ), and 769–799 (SDGMGVMDCTFHPSQPWLFSAGSDGSIKLHV).

It belongs to the WD repeat BOP1/ERB1 family.

It is found in the nucleus. It localises to the nucleolus. The protein resides in the nucleoplasm. In terms of biological role, required for maturation of ribosomal RNAs and formation of the large ribosomal subunit. The protein is Ribosome biogenesis protein BOP1 homolog of Monosiga brevicollis (Choanoflagellate).